A 444-amino-acid chain; its full sequence is tRNA modification GTPase MnmE (444 aa).

(6S)-5-formyl-5,6,7,8-tetrahydrofolate-binding residues include Arg24, Glu81, and Lys121. A TrmE-type G domain is found at 218-368; it reads GLTVVIAGPP…LLDALVGFAR (151 aa). Residues 228-233, 247-253, 272-275, and 349-351 contribute to the GTP site; these read NAGKST, SPQAGTT, DTAG, and SAR. Positions 232 and 253 each coordinate Mg(2+). A (6S)-5-formyl-5,6,7,8-tetrahydrofolate-binding site is contributed by Lys444.

This sequence belongs to the TRAFAC class TrmE-Era-EngA-EngB-Septin-like GTPase superfamily. TrmE GTPase family. Homodimer. Heterotetramer of two MnmE and two MnmG subunits. K(+) is required as a cofactor.

It localises to the cytoplasm. Exhibits a very high intrinsic GTPase hydrolysis rate. Involved in the addition of a carboxymethylaminomethyl (cmnm) group at the wobble position (U34) of certain tRNAs, forming tRNA-cmnm(5)s(2)U34. The chain is tRNA modification GTPase MnmE from Bradyrhizobium sp. (strain ORS 278).